The following is a 466-amino-acid chain: Replication termination factor 1 (466 aa).

DNA-binding domain stretches follow at residues arginine 94–lysine 249 and tyrosine 250–leucine 421. 2 consecutive HTH myb-type domains span residues asparagine 251–glutamate 304 and isoleucine 305–isoleucine 363. 2 DNA-binding regions (H-T-H motif) span residues tryptophan 278 to isoleucine 300 and tryptophan 336 to isoleucine 359.

It localises to the nucleus. Functionally, mediates site-specific replication termination at the polar replication barrier RTS1, a barrier which ensures that replication of the mat1 locus in S.pombe occurs in the centromere-proximal direction. This chain is Replication termination factor 1 (rtf1), found in Schizosaccharomyces pombe (strain 972 / ATCC 24843) (Fission yeast).